Consider the following 203-residue polypeptide: Ribosome maturation factor RimP (203 aa).

Positions 184 to 203 (RRGSAPVEDEEGEGEAPTAH) are disordered.

The protein belongs to the RimP family.

It localises to the cytoplasm. Functionally, required for maturation of 30S ribosomal subunits. This Methylobacterium nodulans (strain LMG 21967 / CNCM I-2342 / ORS 2060) protein is Ribosome maturation factor RimP.